A 426-amino-acid polypeptide reads, in one-letter code: Protein PHOSPHATE STARVATION RESPONSE 2 (426 aa).

3 disordered regions span residues 27–81 (ATLD…PLRS), 96–123 (YTNA…QYGG), and 198–247 (TQPQ…NSKT). Residues 69 to 81 (FQSSTGSVGPLRS) show a composition bias toward polar residues. Composition is skewed to low complexity over residues 102–119 (YNSQ…NYGS) and 205–225 (AAQS…SSQS). The span at 237 to 246 (SGASNTSNSK) shows a compositional bias: polar residues. Positions 243–303 (SNSKTRMRWT…HLQKYRTARY (61 aa)) constitute an HTH myb-type domain. A DNA-binding region (H-T-H motif) is located at residues 274–299 (PKGVLKLMKADNLTIYHVKSHLQKYR). Disordered regions lie at residues 302 to 326 (RYRP…PSID) and 382 to 426 (DKAV…SGDR). Residues 303–322 (YRPELSEGSSEKKAASKEDI) show a composition bias toward basic and acidic residues. Composition is skewed to polar residues over residues 387 to 401 (ASTS…SDLP) and 411 to 426 (ENSQ…SGDR).

As to quaternary structure, interacts (via C-terminus) with SPX4 (via N-terminus) in the presence of inositol polyphosphate. Interacts (via C-terminus) with SPX1 and SPX2 (via SPX domain). Interacts with RLI1 in the nucleus.

It is found in the nucleus. The protein localises to the cytoplasm. Transcription factor involved in phosphate starvation signaling. Binds to P1BS, an imperfect palindromic sequence 5'-GNATATNC-3', to promote the expression of inorganic phosphate (Pi) starvation-responsive genes. Functionally redundant with PHR1 and PHR3 in regulating Pi starvation response and Pi homeostasis. Involved in both systematic and local Pi-signaling pathways. Regulates several Pi transporters. PHR2 binding to DNA is repressed redundantly by SPX1, SPX2 and SPX4 in a PI-dependent manner. The DNA-binding activity is also repressed by SPX4. Involved in root growth under Pi deprivation. Involved in the modulation of Pi response and homeostasis together with RLI1; promotes RLI1 expression in response to nitrate availability, thus triggering the nitrate-induced phosphate response (NIPR). The sequence is that of Protein PHOSPHATE STARVATION RESPONSE 2 from Oryza sativa subsp. indica (Rice).